Consider the following 309-residue polypeptide: uncharacterized protein (309 aa).

The span at 1-16 shows a compositional bias: basic residues; the sequence is MAGNSRRRGAVRKAGT. The disordered stretch occupies residues 1 to 70; that stretch reads MAGNSRRRGA…AKRTEETETV (70 aa). S-adenosyl-L-methionine-binding residues include glycine 261, isoleucine 281, and leucine 290.

Belongs to the class IV-like SAM-binding methyltransferase superfamily. RNA methyltransferase TrmH family.

This is an uncharacterized protein from Mycobacterium avium (strain 104).